A 293-amino-acid chain; its full sequence is uncharacterized protein (293 aa).

E47 is an active-site residue.

The protein belongs to the PhzF family.

This is an uncharacterized protein from Bacillus subtilis (strain 168).